Here is a 526-residue protein sequence, read N- to C-terminus: Beta,beta-carotene 15,15'-dioxygenase (526 aa).

Residues His172, His236, His307, and His512 each contribute to the Fe cation site.

The protein belongs to the carotenoid oxygenase family. The cofactor is Fe(2+).

Its subcellular location is the cytoplasm. It is found in the cytosol. It catalyses the reaction all-trans-beta-carotene + O2 = 2 all-trans-retinal. Its pathway is cofactor metabolism; retinol metabolism. Symmetrically cleaves beta-carotene into two molecules of retinal using a dioxygenase mechanism. The sequence is that of Beta,beta-carotene 15,15'-dioxygenase from Gallus gallus (Chicken).